A 76-amino-acid polypeptide reads, in one-letter code: uncharacterized protein (76 aa).

This is an uncharacterized protein from Saccharomyces cerevisiae (strain ATCC 204508 / S288c) (Baker's yeast).